We begin with the raw amino-acid sequence, 718 residues long: Ribosome-releasing factor 2, mitochondrial (718 aa).

A mitochondrion-targeting transit peptide spans Met1–Tyr29. The tr-type G domain occupies Ser31–Glu310. GTP-binding positions include Ala40–Thr47, Asp104–His108, and Asn158–Asp161.

The protein belongs to the TRAFAC class translation factor GTPase superfamily. Classic translation factor GTPase family. EF-G/EF-2 subfamily.

It localises to the mitochondrion. Functionally, mitochondrial GTPase that mediates the disassembly of ribosomes from messenger RNA at the termination of mitochondrial protein biosynthesis. Not involved in the GTP-dependent ribosomal translocation step during translation elongation. The protein is Ribosome-releasing factor 2, mitochondrial of Drosophila erecta (Fruit fly).